Here is a 343-residue protein sequence, read N- to C-terminus: Ketol-acid reductoisomerase (NADP(+)) (343 aa).

The KARI N-terminal Rossmann domain occupies 7 to 186; that stretch reads TTVYYDEDAD…GCTRAGVIET (180 aa). NADP(+)-binding positions include 30–33, arginine 53, serine 56, serine 58, and 88–91; these read YGSQ and DTIQ. The active site involves histidine 112. Glycine 138 provides a ligand contact to NADP(+). Positions 187 to 329 constitute a KARI C-terminal knotted domain; it reads SFQEEVETDL…ENLRELFAWG (143 aa). Mg(2+) contacts are provided by aspartate 195, glutamate 199, glutamate 231, and glutamate 235. Serine 256 is a binding site for substrate.

This sequence belongs to the ketol-acid reductoisomerase family. Mg(2+) serves as cofactor.

It carries out the reaction (2R)-2,3-dihydroxy-3-methylbutanoate + NADP(+) = (2S)-2-acetolactate + NADPH + H(+). The enzyme catalyses (2R,3R)-2,3-dihydroxy-3-methylpentanoate + NADP(+) = (S)-2-ethyl-2-hydroxy-3-oxobutanoate + NADPH + H(+). Its pathway is amino-acid biosynthesis; L-isoleucine biosynthesis; L-isoleucine from 2-oxobutanoate: step 2/4. It functions in the pathway amino-acid biosynthesis; L-valine biosynthesis; L-valine from pyruvate: step 2/4. Its function is as follows. Involved in the biosynthesis of branched-chain amino acids (BCAA). Catalyzes an alkyl-migration followed by a ketol-acid reduction of (S)-2-acetolactate (S2AL) to yield (R)-2,3-dihydroxy-isovalerate. In the isomerase reaction, S2AL is rearranged via a Mg-dependent methyl migration to produce 3-hydroxy-3-methyl-2-ketobutyrate (HMKB). In the reductase reaction, this 2-ketoacid undergoes a metal-dependent reduction by NADPH to yield (R)-2,3-dihydroxy-isovalerate. The polypeptide is Ketol-acid reductoisomerase (NADP(+)) (Haloarcula marismortui (strain ATCC 43049 / DSM 3752 / JCM 8966 / VKM B-1809) (Halobacterium marismortui)).